We begin with the raw amino-acid sequence, 260 residues long: Adenosylcobinamide-GDP ribazoletransferase (260 aa).

Transmembrane regions (helical) follow at residues 31-51, 57-77, 108-128, 131-151, 173-193, 206-226, and 240-260; these read FYFLPLIGGLIAGLVLIPIYF, IEISGFISLLLYLFLTGSIHL, YGTIGLNVFLLLRYINYSTII, AGLLILAGIISRLSGLAVVVF, FFFWLVLVCFLSLFTPEIAAF, LKYLLLPLTAFILTFIIIRIS, and LIVELTELAVLSTSFFINVHL.

Belongs to the CobS family. It depends on Mg(2+) as a cofactor.

It is found in the cell inner membrane. The catalysed reaction is alpha-ribazole + adenosylcob(III)inamide-GDP = adenosylcob(III)alamin + GMP + H(+). The enzyme catalyses alpha-ribazole 5'-phosphate + adenosylcob(III)inamide-GDP = adenosylcob(III)alamin 5'-phosphate + GMP + H(+). It participates in cofactor biosynthesis; adenosylcobalamin biosynthesis; adenosylcobalamin from cob(II)yrinate a,c-diamide: step 7/7. Joins adenosylcobinamide-GDP and alpha-ribazole to generate adenosylcobalamin (Ado-cobalamin). Also synthesizes adenosylcobalamin 5'-phosphate from adenosylcobinamide-GDP and alpha-ribazole 5'-phosphate. This chain is Adenosylcobinamide-GDP ribazoletransferase, found in Treponema denticola (strain ATCC 35405 / DSM 14222 / CIP 103919 / JCM 8153 / KCTC 15104).